A 424-amino-acid chain; its full sequence is Enolase (424 aa).

Gln-165 serves as a coordination point for (2R)-2-phosphoglycerate. Catalysis depends on Glu-207, which acts as the Proton donor. Residues Asp-244, Glu-283, and Asp-310 each contribute to the Mg(2+) site. (2R)-2-phosphoglycerate contacts are provided by Lys-335, Arg-364, Ser-365, and Lys-386. Lys-335 acts as the Proton acceptor in catalysis.

The protein belongs to the enolase family. The cofactor is Mg(2+).

It is found in the cytoplasm. Its subcellular location is the secreted. It localises to the cell surface. It carries out the reaction (2R)-2-phosphoglycerate = phosphoenolpyruvate + H2O. Its pathway is carbohydrate degradation; glycolysis; pyruvate from D-glyceraldehyde 3-phosphate: step 4/5. In terms of biological role, catalyzes the reversible conversion of 2-phosphoglycerate (2-PG) into phosphoenolpyruvate (PEP). It is essential for the degradation of carbohydrates via glycolysis. This is Enolase from Chlamydia felis (strain Fe/C-56) (Chlamydophila felis).